The following is a 241-amino-acid chain: Caffeoyl-CoA O-methyltransferase (241 aa).

Lys-14 serves as a coordination point for substrate. S-adenosyl-L-methionine-binding positions include Thr-58, Glu-80, 82 to 83 (GV), Ser-88, Asp-106, and Ala-135. Asp-158 is a binding site for substrate. Asp-158 is a binding site for a divalent metal cation. Asp-160 is a binding site for S-adenosyl-L-methionine. A divalent metal cation contacts are provided by Asp-184 and Asn-185.

Belongs to the class I-like SAM-binding methyltransferase superfamily. Cation-dependent O-methyltransferase family. CCoAMT subfamily. It depends on a divalent metal cation as a cofactor.

It catalyses the reaction (E)-caffeoyl-CoA + S-adenosyl-L-methionine = (E)-feruloyl-CoA + S-adenosyl-L-homocysteine + H(+). The protein operates within aromatic compound metabolism; phenylpropanoid biosynthesis. Functionally, methylates caffeoyl-CoA to feruloyl-CoA and 5-hydroxyferuloyl-CoA to sinapoyl-CoA. Plays a role in the synthesis of feruloylated polysaccharides. Involved in the reinforcement of the plant cell wall. Also involved in the responding to wounding or pathogen challenge by the increased formation of cell wall-bound ferulic acid polymers. This chain is Caffeoyl-CoA O-methyltransferase, found in Stellaria longipes (Longstalk starwort).